The following is a 148-amino-acid chain: Sec-independent protein translocase protein TatB (148 aa).

A helical transmembrane segment spans residues 2-22 (FNDIGPLELVTLVVLAVLVFG). Composition is skewed to basic and acidic residues over residues 100-110 (VTDAVHGRESE) and 128-148 (MTKK…ADAT). Residues 100-148 (VTDAVHGRESETSASSSSANGSAGGTVDMTKKREQLEADERPPFDADAT) form a disordered region.

It belongs to the TatB family. The Tat system comprises two distinct complexes: a TatABC complex, containing multiple copies of TatA, TatB and TatC subunits, and a separate TatA complex, containing only TatA subunits. Substrates initially bind to the TatABC complex, which probably triggers association of the separate TatA complex to form the active translocon.

The protein resides in the cell membrane. In terms of biological role, part of the twin-arginine translocation (Tat) system that transports large folded proteins containing a characteristic twin-arginine motif in their signal peptide across membranes. Together with TatC, TatB is part of a receptor directly interacting with Tat signal peptides. TatB may form an oligomeric binding site that transiently accommodates folded Tat precursor proteins before their translocation. In Streptomyces avermitilis (strain ATCC 31267 / DSM 46492 / JCM 5070 / NBRC 14893 / NCIMB 12804 / NRRL 8165 / MA-4680), this protein is Sec-independent protein translocase protein TatB.